The primary structure comprises 158 residues: 2-C-methyl-D-erythritol 2,4-cyclodiphosphate synthase (158 aa).

Positions 9 and 11 each coordinate a divalent metal cation. 4-CDP-2-C-methyl-D-erythritol 2-phosphate contacts are provided by residues 9-11 (DVH) and 35-36 (HS). Residue His-43 coordinates a divalent metal cation. Residues 57 to 59 (DIG), 62 to 66 (FPDTD), 101 to 107 (AQKPKMA), 133 to 136 (TTTE), Phe-140, and Arg-143 each bind 4-CDP-2-C-methyl-D-erythritol 2-phosphate.

This sequence belongs to the IspF family. As to quaternary structure, homotrimer. A divalent metal cation is required as a cofactor.

The catalysed reaction is 4-CDP-2-C-methyl-D-erythritol 2-phosphate = 2-C-methyl-D-erythritol 2,4-cyclic diphosphate + CMP. It participates in isoprenoid biosynthesis; isopentenyl diphosphate biosynthesis via DXP pathway; isopentenyl diphosphate from 1-deoxy-D-xylulose 5-phosphate: step 4/6. Functionally, involved in the biosynthesis of isopentenyl diphosphate (IPP) and dimethylallyl diphosphate (DMAPP), two major building blocks of isoprenoid compounds. Catalyzes the conversion of 4-diphosphocytidyl-2-C-methyl-D-erythritol 2-phosphate (CDP-ME2P) to 2-C-methyl-D-erythritol 2,4-cyclodiphosphate (ME-CPP) with a corresponding release of cytidine 5-monophosphate (CMP). The polypeptide is 2-C-methyl-D-erythritol 2,4-cyclodiphosphate synthase (Bacillus cereus (strain B4264)).